Here is a 249-residue protein sequence, read N- to C-terminus: MIDPIHQFNIEKIFTIGHIGGQEIAFTNSSAYMLVAVAVISLLMIGGVAGRQMVPGRIQSLAEISYEFVAGTIRSTAGVEGLKFFPLVFSLFMFIMISNMVGIIPYTFTITSHLIVTAALALLVFLTVLIYGFYRNGLGFFKIFVPSGVPVFILPLVVFIEVFSFFLRPISHSVRLFANMLAGHIALKVFASFIPLLAGLGIAGYFGAVLPLGMVIALTALELLVAFLQAYVFAILTCIYLNDALHAGH.

A run of 6 helical transmembrane segments spans residues Ser30 to Gly50, Phe84 to Ile104, Leu114 to Tyr134, Ile143 to Phe163, Leu196 to Ile216, and Leu221 to Leu241.

Belongs to the ATPase A chain family. In terms of assembly, F-type ATPases have 2 components, CF(1) - the catalytic core - and CF(0) - the membrane proton channel. CF(1) has five subunits: alpha(3), beta(3), gamma(1), delta(1), epsilon(1). CF(0) has four main subunits: a, b, b' and c.

The protein localises to the cell inner membrane. Its function is as follows. Key component of the proton channel; it plays a direct role in the translocation of protons across the membrane. The protein is ATP synthase subunit a of Rhodopseudomonas palustris (strain BisB18).